The sequence spans 78 residues: MLSQEQLDRINELANKSKVEPLTDAETAEQKELRTAYLEAFRGSFKNQMMGIKIVDEEGTDVTPEKLKQAQEEERNKQ.

The tract at residues 57–78 (EEGTDVTPEKLKQAQEEERNKQ) is disordered. Residues 63 to 78 (TPEKLKQAQEEERNKQ) show a composition bias toward basic and acidic residues.

It belongs to the UPF0291 family.

It localises to the cytoplasm. This is UPF0291 protein Exig_1097 from Exiguobacterium sibiricum (strain DSM 17290 / CCUG 55495 / CIP 109462 / JCM 13490 / 255-15).